The following is a 115-amino-acid chain: U3-lycotoxin-Ls1i (115 aa).

An N-terminal signal peptide occupies residues 1–20 (MKFVLLFGVFLVTLFSYSSA). Positions 21 to 44 (EMLDDFDQADEDELLSLIEKEEAR) are excised as a propeptide. 4 disulfides stabilise this stretch: cysteine 48/cysteine 63, cysteine 55/cysteine 72, cysteine 62/cysteine 87, and cysteine 74/cysteine 85.

Belongs to the neurotoxin 19 (CSTX) family. 01 subfamily. As to expression, expressed by the venom gland.

The protein resides in the secreted. This Lycosa singoriensis (Wolf spider) protein is U3-lycotoxin-Ls1i.